Here is a 672-residue protein sequence, read N- to C-terminus: DNA ligase (672 aa).

NAD(+)-binding positions include D32–D36, S81–L82, and E114. The active-site N6-AMP-lysine intermediate is K116. NAD(+) is bound by residues R137, E174, K291, and K315. Zn(2+) contacts are provided by C409, C412, C427, and C433. The BRCT domain occupies V592 to S672.

This sequence belongs to the NAD-dependent DNA ligase family. LigA subfamily. It depends on Mg(2+) as a cofactor. Mn(2+) serves as cofactor.

The enzyme catalyses NAD(+) + (deoxyribonucleotide)n-3'-hydroxyl + 5'-phospho-(deoxyribonucleotide)m = (deoxyribonucleotide)n+m + AMP + beta-nicotinamide D-nucleotide.. Functionally, DNA ligase that catalyzes the formation of phosphodiester linkages between 5'-phosphoryl and 3'-hydroxyl groups in double-stranded DNA using NAD as a coenzyme and as the energy source for the reaction. It is essential for DNA replication and repair of damaged DNA. This is DNA ligase from Actinobacillus succinogenes (strain ATCC 55618 / DSM 22257 / CCUG 43843 / 130Z).